The following is a 177-amino-acid chain: Small ribosomal subunit protein uS4 (177 aa).

In terms of domain architecture, S4 RNA-binding spans 104–166 (RRLQTIVYKK…PTSPFKQHPP (63 aa)). A disordered region spans residues 158 to 177 (TSPFKQHPPTQQGEENVQQA). Residues 165 to 177 (PPTQQGEENVQQA) are compositionally biased toward polar residues.

This sequence belongs to the universal ribosomal protein uS4 family. As to quaternary structure, part of the 30S ribosomal subunit. Contacts protein S5. The interaction surface between S4 and S5 is involved in control of translational fidelity.

Functionally, one of the primary rRNA binding proteins, it binds directly to 16S rRNA where it nucleates assembly of the body of the 30S subunit. With S5 and S12 plays an important role in translational accuracy. This Sulfurisphaera tokodaii (strain DSM 16993 / JCM 10545 / NBRC 100140 / 7) (Sulfolobus tokodaii) protein is Small ribosomal subunit protein uS4.